Reading from the N-terminus, the 494-residue chain is Tetracenomycin biosynthesis bifunctional cyclase/O-methyl transferase TcmN (494 aa).

Residues Val-11 to Ile-140 are polyketide cyclase. The active-site Proton acceptor; for cyclase activity is Ser-67. Active-site proton donor; for cyclase activity residues include Arg-69 and Arg-82. Residues Leu-169–Val-494 form a methyltransferase region. S-adenosyl-L-methionine contacts are provided by residues Asp-358 and Gly-384 to Phe-386. The active-site Proton acceptor; for methyltransferase activity is the His-405.

It in the C-terminal section; belongs to the class I-like SAM-binding methyltransferase superfamily. Cation-independent O-methyltransferase family. The tetracenomycin polyketide synthase (TCM PKS) is composed of a ketosynthase complex (TcmKL), an acyl carrier protein (TcmM), a cyclase (TcmN) and a probable second cyclase (TcmJ). TcmN is a homodimer in solution.

It carries out the reaction 10 malonyl-CoA + 8 H(+) = tetracenomycin F2 + 10 CO2 + 10 CoA + 2 H2O. It functions in the pathway antibiotic biosynthesis; tetracenomycin C biosynthesis. Involved in the biosynthesis of tetracenomycin C (TCM C). Part of a type II polyketide synthase (PKS) that catalyzes the synthesis of tetracenomycin F2 (TCM F2), a precursor of TCM C, from malonyl-CoA. The TcmN N-terminal domain, when coupled with the other components of the PKS, catalyzes the cyclization and aromatization of the linear polyketide intermediate. Catalyzes the cyclization of the first and second rings. In addition, the C-terminal domain acts as a methyltransferase. It catalyzes the specific O-methylation of tetracenomycin D3 (TCM D3) to TCM B3, using S-adenosyl-L-methionine as the methyl donor. The polypeptide is Tetracenomycin biosynthesis bifunctional cyclase/O-methyl transferase TcmN (Streptomyces glaucescens).